We begin with the raw amino-acid sequence, 349 residues long: Lipoyl synthase (349 aa).

[4Fe-4S] cluster-binding residues include C55, C60, C66, C81, C85, C88, and S292. The region spanning 67–281 (WEDREATFLI…SDAAYELGIK (215 aa)) is the Radical SAM core domain. A disordered region spans residues 321-349 (LDSTTSQEASTLLERYGASEDTPVTASRR).

It belongs to the radical SAM superfamily. Lipoyl synthase family. [4Fe-4S] cluster serves as cofactor.

The protein localises to the cytoplasm. It catalyses the reaction [[Fe-S] cluster scaffold protein carrying a second [4Fe-4S](2+) cluster] + N(6)-octanoyl-L-lysyl-[protein] + 2 oxidized [2Fe-2S]-[ferredoxin] + 2 S-adenosyl-L-methionine + 4 H(+) = [[Fe-S] cluster scaffold protein] + N(6)-[(R)-dihydrolipoyl]-L-lysyl-[protein] + 4 Fe(3+) + 2 hydrogen sulfide + 2 5'-deoxyadenosine + 2 L-methionine + 2 reduced [2Fe-2S]-[ferredoxin]. It participates in protein modification; protein lipoylation via endogenous pathway; protein N(6)-(lipoyl)lysine from octanoyl-[acyl-carrier-protein]: step 2/2. Catalyzes the radical-mediated insertion of two sulfur atoms into the C-6 and C-8 positions of the octanoyl moiety bound to the lipoyl domains of lipoate-dependent enzymes, thereby converting the octanoylated domains into lipoylated derivatives. The polypeptide is Lipoyl synthase (Corynebacterium jeikeium (strain K411)).